The primary structure comprises 309 residues: Taste receptor type 2 member 31 (309 aa).

Over 1 to 2 (MI) the chain is Extracellular. A helical transmembrane segment spans residues 3–23 (TFLPIIFSILVVVTFVIGNFA). Residues 24-55 (NGFIALVNSTEWVKRQKISFADQILTALAVSR) are Cytoplasmic-facing. A helical transmembrane segment spans residues 56–76 (VGLLWVLLLNWYATVLNPAFY). Residues 77–100 (SVEVRTTTYNVWAVTNHFSNWLAT) are Extracellular-facing. Residues 101 to 121 (SLSIFYLLKIANFSNLIFLHL) traverse the membrane as a helical segment. Residues 122–126 (KRRVK) are Cytoplasmic-facing. The chain crosses the membrane as a helical span at residues 127-147 (NVILVMLLGPLLILACHLFMV). Residues 148 to 181 (NMNEIVRTKEYEENMTWKYILRNAIYHPGMTVTT) lie on the Extracellular side of the membrane. N161 carries N-linked (GlcNAc...) asparagine glycosylation. A helical membrane pass occupies residues 182–202 (LQNLVPFTLTLISFLLLICSL). Residues 203-229 (CKHLKKMQLHGKGPQDPSTKVHIKALQ) are Cytoplasmic-facing. The helical transmembrane segment at 230 to 250 (IVISFLLLCVIYFVSVIISIW) threads the bilayer. The Extracellular portion of the chain corresponds to 251 to 259 (SFESLGNKP). Residues 260–280 (VFMFCQAIRFSYPSAHPFIVI) traverse the membrane as a helical segment. Over 281-309 (WGNKKLKQTFLSVLWNVRYWVKGQKPSSL) the chain is Cytoplasmic.

The protein belongs to the G-protein coupled receptor T2R family.

It localises to the membrane. In terms of biological role, receptor that may play a role in the perception of bitterness and is gustducin-linked. May play a role in sensing the chemical composition of the gastrointestinal content. The activity of this receptor may stimulate alpha gustducin, mediate PLC-beta-2 activation and lead to the gating of TRPM5. This Papio hamadryas (Hamadryas baboon) protein is Taste receptor type 2 member 31 (TAS2R31).